Reading from the N-terminus, the 491-residue chain is Cobyric acid synthase (491 aa).

In terms of domain architecture, GATase cobBQ-type spans 250-441 (DLQITVVRLP…LHGLFDNGPW (192 aa)). Cys-331 (nucleophile) is an active-site residue. His-433 is an active-site residue.

It belongs to the CobB/CobQ family. CobQ subfamily.

It participates in cofactor biosynthesis; adenosylcobalamin biosynthesis. Catalyzes amidations at positions B, D, E, and G on adenosylcobyrinic A,C-diamide. NH(2) groups are provided by glutamine, and one molecule of ATP is hydrogenolyzed for each amidation. The protein is Cobyric acid synthase of Trichormus variabilis (strain ATCC 29413 / PCC 7937) (Anabaena variabilis).